We begin with the raw amino-acid sequence, 20 residues long: Luminal-binding protein (20 aa).

The protein belongs to the heat shock protein 70 family.

The protein resides in the endoplasmic reticulum lumen. In terms of biological role, probably plays a role in facilitating the assembly of multimeric protein complexes inside the ER. In Phaseolus vulgaris (Kidney bean), this protein is Luminal-binding protein.